We begin with the raw amino-acid sequence, 275 residues long: Type III pantothenate kinase (275 aa).

An ATP-binding site is contributed by 6–13 (DAGNTNIV). 108-111 (GADR) is a binding site for substrate. Asp-110 acts as the Proton acceptor in catalysis. Asp-130 contacts K(+). ATP is bound at residue Thr-133. Thr-187 contributes to the substrate binding site.

This sequence belongs to the type III pantothenate kinase family. As to quaternary structure, homodimer. The cofactor is NH4(+). K(+) is required as a cofactor.

It is found in the cytoplasm. It carries out the reaction (R)-pantothenate + ATP = (R)-4'-phosphopantothenate + ADP + H(+). It participates in cofactor biosynthesis; coenzyme A biosynthesis; CoA from (R)-pantothenate: step 1/5. In terms of biological role, catalyzes the phosphorylation of pantothenate (Pan), the first step in CoA biosynthesis. The polypeptide is Type III pantothenate kinase (Zymomonas mobilis subsp. mobilis (strain ATCC 31821 / ZM4 / CP4)).